A 365-amino-acid chain; its full sequence is Phosphoserine aminotransferase (365 aa).

Arginine 40 contacts L-glutamate. Pyridoxal 5'-phosphate is bound by residues 74–75 (AS), phenylalanine 99, threonine 155, aspartate 177, and glutamine 200. Lysine 201 bears the N6-(pyridoxal phosphate)lysine mark. 241-242 (NT) is a binding site for pyridoxal 5'-phosphate.

The protein belongs to the class-V pyridoxal-phosphate-dependent aminotransferase family. SerC subfamily. In terms of assembly, homodimer. The cofactor is pyridoxal 5'-phosphate.

The protein resides in the cytoplasm. It carries out the reaction O-phospho-L-serine + 2-oxoglutarate = 3-phosphooxypyruvate + L-glutamate. It catalyses the reaction 4-(phosphooxy)-L-threonine + 2-oxoglutarate = (R)-3-hydroxy-2-oxo-4-phosphooxybutanoate + L-glutamate. The protein operates within amino-acid biosynthesis; L-serine biosynthesis; L-serine from 3-phospho-D-glycerate: step 2/3. Catalyzes the reversible conversion of 3-phosphohydroxypyruvate to phosphoserine and of 3-hydroxy-2-oxo-4-phosphonooxybutanoate to phosphohydroxythreonine. This Lactococcus lactis subsp. cremoris (strain SK11) protein is Phosphoserine aminotransferase.